Here is a 728-residue protein sequence, read N- to C-terminus: Ferric reduction oxidase 8, mitochondrial (728 aa).

The transit peptide at 1–24 (MAKVLTLLVLRLLMNLLLIGWISL) directs the protein to the mitochondrion. A run of 5 helical transmembrane segments spans residues 56-74 (FAVF…LIYL), 104-127 (IGIV…WNFY), 194-217 (YHVW…LFIW), 269-293 (THHL…YWVL), and 316-336 (ILSA…KDPM). Residues 159–281 (FGLLAEACLS…LYIVFLVAFL (123 aa)) form the Ferric oxidoreductase domain. Heme-binding residues include His195, His209, His270, and His283. The 119-residue stretch at 300-418 (GLDKILRIVQ…EGPYGPASVD (119 aa)) folds into the FAD-binding FR-type domain. Position 358–361 (358–361 (HPFS)) interacts with FAD. An NAD(+)-binding site is contributed by 410-413 (GPYG). Helical transmembrane passes span 537–559 (FRWL…IGLS) and 595–616 (DLII…ATIL).

This sequence belongs to the ferric reductase (FRE) family. FAD is required as a cofactor. As to expression, expressed in shoots. Detected in roots, pedicels, flowers, siliques and leaf veins.

The protein localises to the mitochondrion membrane. It catalyses the reaction 2 a Fe(II)-siderophore + NAD(+) + H(+) = 2 a Fe(III)-siderophore + NADH. In terms of biological role, ferric chelate reductase probably involved in iron reduction in leaf veins for transport. May participate in the transport of electrons to a Fe(3+) ion via FAD and heme intermediates. This chain is Ferric reduction oxidase 8, mitochondrial (FRO8), found in Arabidopsis thaliana (Mouse-ear cress).